Consider the following 413-residue polypeptide: Probable elongation factor 1-gamma 2 (413 aa).

Residues 1–82 enclose the GST N-terminal domain; it reads MALVMHTYKG…YVSRKNGDNS (82 aa). A GST C-terminal domain is found at 87 to 215; the sequence is SLIEYAHIEQ…AKQTEAVPPV (129 aa). Positions 207–260 are disordered; it reads KQTEAVPPVPTKKAPQPAKPKEEPKKAAPVAEAPKPAEEEEAPKPKAKNPLDLL. One can recognise an EF-1-gamma C-terminal domain in the interval 253–413; it reads AKNPLDLLPP…EALLDAKCFK (161 aa).

In terms of assembly, EF-1 is composed of four subunits: alpha, beta, delta, and gamma.

Its function is as follows. Probably plays a role in anchoring the complex to other cellular components. The sequence is that of Probable elongation factor 1-gamma 2 from Arabidopsis thaliana (Mouse-ear cress).